The following is a 680-amino-acid chain: DNA ligase (680 aa).

NAD(+)-binding positions include D44–D48, S93–M94, and E125. K127 functions as the N6-AMP-lysine intermediate in the catalytic mechanism. 4 residues coordinate NAD(+): R148, E182, K298, and K322. Positions 416, 419, 434, and 439 each coordinate Zn(2+). The BRCT domain occupies N600 to Q680.

This sequence belongs to the NAD-dependent DNA ligase family. LigA subfamily. Requires Mg(2+) as cofactor. Mn(2+) serves as cofactor.

The enzyme catalyses NAD(+) + (deoxyribonucleotide)n-3'-hydroxyl + 5'-phospho-(deoxyribonucleotide)m = (deoxyribonucleotide)n+m + AMP + beta-nicotinamide D-nucleotide.. Its function is as follows. DNA ligase that catalyzes the formation of phosphodiester linkages between 5'-phosphoryl and 3'-hydroxyl groups in double-stranded DNA using NAD as a coenzyme and as the energy source for the reaction. It is essential for DNA replication and repair of damaged DNA. The sequence is that of DNA ligase from Limosilactobacillus reuteri (strain DSM 20016) (Lactobacillus reuteri).